Consider the following 297-residue polypeptide: MADINLKGMGVALITPFKEDESVDYEALGKLVDYQVQNGTDYLVVLGTTAETPTLTEEEKKNIISLVVTRVRGRIPIVLGVGGNCTRSVVEKLKTDNFEGIDAILSVVPYYNKPSQEGIYQHYKAIANATHLPIVLYNVPGRTGVNMTAETTLRIAREFDNVIAVKEASGNITQMDDIIKNKPARFNVISGDDGITFPLMTLGAVGVISVIGNAFPREFSRMVRLALAGDYDSARTIHHSFTELFSLLFVDGNPAGAKSMLNMMGFIENKLRLPLVPTRIVTYEKIREVLRQLSIKC.

Thr-49 contacts pyruvate. Tyr-137 (proton donor/acceptor) is an active-site residue. The active-site Schiff-base intermediate with substrate is Lys-166. Residue Ile-208 participates in pyruvate binding.

The protein belongs to the DapA family. As to quaternary structure, homotetramer; dimer of dimers.

Its subcellular location is the cytoplasm. The enzyme catalyses L-aspartate 4-semialdehyde + pyruvate = (2S,4S)-4-hydroxy-2,3,4,5-tetrahydrodipicolinate + H2O + H(+). It functions in the pathway amino-acid biosynthesis; L-lysine biosynthesis via DAP pathway; (S)-tetrahydrodipicolinate from L-aspartate: step 3/4. Catalyzes the condensation of (S)-aspartate-beta-semialdehyde [(S)-ASA] and pyruvate to 4-hydroxy-tetrahydrodipicolinate (HTPA). The protein is 4-hydroxy-tetrahydrodipicolinate synthase of Parabacteroides distasonis (strain ATCC 8503 / DSM 20701 / CIP 104284 / JCM 5825 / NCTC 11152).